Here is a 282-residue protein sequence, read N- to C-terminus: Putative peroxisomal biogenesis factor 19 (282 aa).

A disordered region spans residues 73–95 (QEEAMKKAGADPSEGEGEQPLDP). C279 carries the cysteine methyl ester modification. C279 is lipidated: S-farnesyl cysteine. Positions 280 to 282 (SIM) are cleaved as a propeptide — removed in mature form.

This sequence belongs to the peroxin-19 family.

It is found in the peroxisome. The sequence is that of Putative peroxisomal biogenesis factor 19 (prx-19) from Caenorhabditis elegans.